The sequence spans 393 residues: Xylose transport system permease protein XylH (393 aa).

The Periplasmic portion of the chain corresponds to 1–24 (MSKSNPSEVKLAVPTSGGFSGLKS). A helical membrane pass occupies residues 25-45 (LNLQVFVMIAAIIAIMLFFTW). Topologically, residues 46–64 (TTDGAYLSARNVSNLLRQT) are cytoplasmic. Residues 65–85 (AITGILAVGMVFVIISAEIDL) form a helical membrane-spanning segment. The Periplasmic portion of the chain corresponds to 86–102 (SVGSMMGLLGGVAAICD). The chain crosses the membrane as a helical span at residues 103–123 (VWLGWPLPLTIIVTLVLGLLL). Topologically, residues 124–135 (GAWNGWWVAYRK) are cytoplasmic. Residues 136 to 156 (VPSFIVTLAGMLAFRGILIGI) form a helical membrane-spanning segment. The Periplasmic portion of the chain corresponds to 157 to 175 (TNGTTVSPTSAAMSQIGQS). The helical transmembrane segment at 176-196 (YLPASTGFIIGALGLMAFVGW) threads the bilayer. Over 197–214 (QWRGRMRRQALGLQSPAS) the chain is Cytoplasmic. A helical transmembrane segment spans residues 215-235 (TAVVGRQALTAIIVLGAIWLL). Over 236–239 (NDYR) the chain is Periplasmic. The chain crosses the membrane as a helical span at residues 240 to 260 (GVPTPVLLLTLLLLGGMFMAT). Over 261-287 (RTAFGRRIYAIGGNLEAARLSGINVER) the chain is Cytoplasmic. The chain crosses the membrane as a helical span at residues 288–308 (TKLAVFAINGLMVAIAGLILS). Residues 309–312 (SRLG) lie on the Periplasmic side of the membrane. A helical membrane pass occupies residues 313–333 (AGSPSAGNIAELDAIAACVIG). The Cytoplasmic portion of the chain corresponds to 334–336 (GTS). A helical membrane pass occupies residues 337-357 (LAGGVGSVAGAVMGAFIMASL). At 358-365 (DNGMSMMD) the chain is on the periplasmic side. A helical transmembrane segment spans residues 366-386 (VPTFWQYIVKGAILLLAVWMD). At 387–393 (SATKRRS) the chain is on the cytoplasmic side.

It belongs to the binding-protein-dependent transport system permease family. AraH/RbsC subfamily.

It localises to the cell inner membrane. In terms of biological role, part of the binding-protein-dependent transport system for D-xylose. Probably responsible for the translocation of the substrate across the membrane. The polypeptide is Xylose transport system permease protein XylH (xylH) (Escherichia coli O6:H1 (strain CFT073 / ATCC 700928 / UPEC)).